Reading from the N-terminus, the 182-residue chain is Large ribosomal subunit protein uL10 (182 aa).

This sequence belongs to the universal ribosomal protein uL10 family. Part of the ribosomal stalk of the 50S ribosomal subunit. The N-terminus interacts with L11 and the large rRNA to form the base of the stalk. The C-terminus forms an elongated spine to which L12 dimers bind in a sequential fashion forming a multimeric L10(L12)X complex.

Its function is as follows. Forms part of the ribosomal stalk, playing a central role in the interaction of the ribosome with GTP-bound translation factors. This chain is Large ribosomal subunit protein uL10, found in Herminiimonas arsenicoxydans.